The chain runs to 110 residues: Hydrogenase maturation factor HypA (110 aa).

Residue His-2 participates in Ni(2+) binding. Residues Cys-70, Cys-73, Cys-86, and Cys-89 each coordinate Zn(2+).

It belongs to the HypA/HybF family.

Functionally, involved in the maturation of [NiFe] hydrogenases. Required for nickel insertion into the metal center of the hydrogenase. The protein is Hydrogenase maturation factor HypA of Geotalea uraniireducens (strain Rf4) (Geobacter uraniireducens).